The following is a 398-amino-acid chain: Succinate--CoA ligase [ADP-forming] subunit beta (398 aa).

In terms of domain architecture, ATP-grasp spans 9–254 (KRLLHEYGAP…ISEEDPKEIE (246 aa)). Residues lysine 46, 53–55 (GRG), glutamate 109, alanine 112, and glutamate 117 contribute to the ATP site. The Mg(2+) site is built by asparagine 209 and aspartate 223. Substrate is bound by residues asparagine 274 and 331–333 (GIM).

It belongs to the succinate/malate CoA ligase beta subunit family. As to quaternary structure, heterotetramer of two alpha and two beta subunits. It depends on Mg(2+) as a cofactor.

The enzyme catalyses succinate + ATP + CoA = succinyl-CoA + ADP + phosphate. It catalyses the reaction GTP + succinate + CoA = succinyl-CoA + GDP + phosphate. Its pathway is carbohydrate metabolism; tricarboxylic acid cycle; succinate from succinyl-CoA (ligase route): step 1/1. In terms of biological role, succinyl-CoA synthetase functions in the citric acid cycle (TCA), coupling the hydrolysis of succinyl-CoA to the synthesis of either ATP or GTP and thus represents the only step of substrate-level phosphorylation in the TCA. The beta subunit provides nucleotide specificity of the enzyme and binds the substrate succinate, while the binding sites for coenzyme A and phosphate are found in the alpha subunit. This Bartonella bacilliformis (strain ATCC 35685 / KC583 / Herrer 020/F12,63) protein is Succinate--CoA ligase [ADP-forming] subunit beta.